The chain runs to 363 residues: Putative aryl-alcohol dehydrogenase AAD3 (363 aa).

Belongs to the aldo/keto reductase family. Aldo/keto reductase 2 subfamily.

The chain is Putative aryl-alcohol dehydrogenase AAD3 (AAD3) from Saccharomyces cerevisiae (strain ATCC 204508 / S288c) (Baker's yeast).